A 324-amino-acid chain; its full sequence is Viral cathepsin (324 aa).

An N-terminal signal peptide occupies residues 1–16; sequence MNKIMLCLLVCGVVHA. Positions 17–113 are cleaved as a propeptide — activation peptide; that stretch reads ATYDLLKAPN…VILDRPPDRG (97 aa). 3 disulfide bridges follow: Cys-134-Cys-175, Cys-168-Cys-208, and Cys-263-Cys-311. Cys-137 is an active-site residue. Asn-159 carries an N-linked (GlcNAc...) asparagine; by host glycan. Active-site residues include His-270 and Asn-290.

The protein belongs to the peptidase C1 family. In terms of processing, synthesized as an inactive proenzyme and activated by proteolytic removal of the inhibitory propeptide.

The enzyme catalyses Endopeptidase of broad specificity, hydrolyzing substrates of both cathepsin L and cathepsin B.. Cysteine protease that plays an essential role in host liquefaction to facilitate horizontal transmission of the virus. May participate in the degradation of foreign protein expressed by the baculovirus system. This Orgyia pseudotsugata (Douglas-fir tussock moth) protein is Viral cathepsin (VCATH).